The primary structure comprises 92 residues: Nodulation protein F (92 aa).

A Carrier domain is found at 4 to 88; that stretch reads QLTLEIISAI…DVVEAVRGLL (85 aa). O-(pantetheine 4'-phosphoryl)serine is present on serine 45.

In terms of processing, 4'-phosphopantetheine is transferred from CoA to a specific serine of apo-NodF.

Its function is as follows. Proposed to synthesize nod factor fatty acyl chain. Involved in trans-2,trans-4,trans-6,cis-11-octadecatetraenoic acid biosynthesis. The polypeptide is Nodulation protein F (nodF) (Rhizobium leguminosarum bv. viciae).